A 521-amino-acid polypeptide reads, in one-letter code: MKVSLWLTLLGVNLSLALAVGTDFPASCQAFSPDTRAANAHREFTEYVPAGTNLSLPYNDATCARPNQVVTVDLCRVALYVETSNRSSVTTEIWLPRNWTGRFLGTGNGGIDGCIKYEDLAYGAANGFAVVGSNNGHNGTTAASFYQNSDVLADFAWRALHLSTVIGKEITQAFYGEPHRKSYYLGCSLGGRQGINSAVEFPDDFDGIIAGSPAVDFNSLVSWRASFFPITGSANSTDFISVSTWKDLIHAEVLTQCDTLDCVNDGIIEDPSLCNFCPEALKCTDDRINNCLSPAQVEIVRKVFSPMYGEDGQLIFPAMQPGSELEAADQLYTGKPFRYSKEWFQYVVYNPSWDPAEFDIHDAKVADDLNPQNIRTWPNDLSNYEKRGGKIITFHGQQDGKITSFNTERFYNHLATAMNMSSSELDNFFRFFRISGMSHCSSGPGAWAFGQGGSPAPAMTPFNGNENILAALVAWVEHGVAPETITGTKYVDDNPELGISIRRSHCRFVIQLNHGRHELCY.

A signal peptide spans 1 to 19 (MKVSLWLTLLGVNLSLALA). N-linked (GlcNAc...) asparagine glycosylation is found at asparagine 13, asparagine 53, asparagine 85, asparagine 98, and asparagine 138. Intrachain disulfides connect cysteine 28-cysteine 75 and cysteine 63-cysteine 114. Disulfide bonds link cysteine 187–cysteine 440, cysteine 257–cysteine 274, cysteine 283–cysteine 291, and cysteine 506–cysteine 520. The active-site Acyl-ester intermediate is serine 188. Residue asparagine 235 is glycosylated (N-linked (GlcNAc...) asparagine). Residues aspartate 258, aspartate 261, valine 263, aspartate 265, and isoleucine 267 each contribute to the Ca(2+) site. Aspartate 399 acts as the Charge relay system in catalysis. Residue asparagine 419 is glycosylated (N-linked (GlcNAc...) asparagine). Catalysis depends on histidine 439, which acts as the Charge relay system.

The protein belongs to the tannase family.

The protein resides in the secreted. It carries out the reaction feruloyl-polysaccharide + H2O = ferulate + polysaccharide.. Involved in degradation of plant cell walls. Hydrolyzes the feruloyl-arabinose ester bond in arabinoxylans as well as the feruloyl-galactose and feruloyl-arabinose ester bonds in pectin. This Aspergillus flavus (strain ATCC 200026 / FGSC A1120 / IAM 13836 / NRRL 3357 / JCM 12722 / SRRC 167) protein is Probable feruloyl esterase B-2 (faeB-2).